A 132-amino-acid polypeptide reads, in one-letter code: Glycine cleavage system H protein (132 aa).

Positions 24 to 106 (IATIGLSAHA…YEEGWFIKVR (83 aa)) constitute a Lipoyl-binding domain. Position 65 is an N6-lipoyllysine (Lys65).

The protein belongs to the GcvH family. In terms of assembly, the glycine cleavage system is composed of four proteins: P, T, L and H. (R)-lipoate is required as a cofactor.

In terms of biological role, the glycine cleavage system catalyzes the degradation of glycine. The H protein shuttles the methylamine group of glycine from the P protein to the T protein. This is Glycine cleavage system H protein from Picosynechococcus sp. (strain ATCC 27264 / PCC 7002 / PR-6) (Agmenellum quadruplicatum).